Here is a 133-residue protein sequence, read N- to C-terminus: MSLQVRILTPEQVFLNVSADEIILPTNTGQMGVLTNHTPLITAIDIGPMLVRSESTWQSMALLGGLALVKDNQVIILVNEAELGSDINAEEAETTFLAAKEALANSKTRKDQIENNLAFKRARVRYQVATLVK.

Belongs to the ATPase epsilon chain family. F-type ATPases have 2 components, CF(1) - the catalytic core - and CF(0) - the membrane proton channel. CF(1) has five subunits: alpha(3), beta(3), gamma(1), delta(1), epsilon(1). CF(0) has three main subunits: a, b and c.

The protein resides in the plastid. The protein localises to the chloroplast thylakoid membrane. Its function is as follows. Produces ATP from ADP in the presence of a proton gradient across the membrane. This Nephroselmis olivacea (Green alga) protein is ATP synthase epsilon chain, chloroplastic.